Here is a 1017-residue protein sequence, read N- to C-terminus: Probable disease resistance protein RDL5 (1017 aa).

The stretch at 25 to 52 (QGVEDQVTELKRDLNMLSSFLKDANAKK) forms a coiled coil. In terms of domain architecture, NB-ARC spans 147–460 (KQREMRQKFS…AEGIFQPRHY (314 aa)). Position 190–197 (190–197 (GMGGLGKT)) interacts with ATP. 7 LRR repeats span residues 602–627 (LIHLRYLSLEYAEVTHIPYSLGNLKL), 649–674 (MQELRYLALPSDMGRKTKLELSNLVK), 675–699 (LETLENFSTENSSLEDLCGMVRLST), 768–791 (PSHLTTLYLESCRLEEDPMPILEK), 792–819 (LLQLKELELGFESFSGKKMVCSSGGFPQ), 841–865 (MPLLRTLDIQVCRKLKQLPDEHLPS), and 937–962 (MPFLHTLYIDDCPKLKKLPDGLQFIY).

Belongs to the disease resistance NB-LRR family.

Functionally, potential disease resistance protein. This Arabidopsis thaliana (Mouse-ear cress) protein is Probable disease resistance protein RDL5 (RDL5).